A 119-amino-acid polypeptide reads, in one-letter code: Ribonuclease P protein component (119 aa).

It belongs to the RnpA family. As to quaternary structure, consists of a catalytic RNA component (M1 or rnpB) and a protein subunit.

It carries out the reaction Endonucleolytic cleavage of RNA, removing 5'-extranucleotides from tRNA precursor.. Functionally, RNaseP catalyzes the removal of the 5'-leader sequence from pre-tRNA to produce the mature 5'-terminus. It can also cleave other RNA substrates such as 4.5S RNA. The protein component plays an auxiliary but essential role in vivo by binding to the 5'-leader sequence and broadening the substrate specificity of the ribozyme. The polypeptide is Ribonuclease P protein component (Syntrophus aciditrophicus (strain SB)).